The following is a 398-amino-acid chain: Succinate--CoA ligase [ADP-forming] subunit beta (398 aa).

The 246-residue stretch at 9–254 (KALLKSYGAP…TTEEDDKEIE (246 aa)) folds into the ATP-grasp domain. ATP contacts are provided by residues lysine 46, 53–55 (GRG), glutamate 109, alanine 112, and glutamate 117. Residues asparagine 209 and aspartate 223 each contribute to the Mg(2+) site. Substrate contacts are provided by residues asparagine 274 and 331-333 (GIM).

This sequence belongs to the succinate/malate CoA ligase beta subunit family. In terms of assembly, heterotetramer of two alpha and two beta subunits. The cofactor is Mg(2+).

It carries out the reaction succinate + ATP + CoA = succinyl-CoA + ADP + phosphate. The enzyme catalyses GTP + succinate + CoA = succinyl-CoA + GDP + phosphate. Its pathway is carbohydrate metabolism; tricarboxylic acid cycle; succinate from succinyl-CoA (ligase route): step 1/1. Functionally, succinyl-CoA synthetase functions in the citric acid cycle (TCA), coupling the hydrolysis of succinyl-CoA to the synthesis of either ATP or GTP and thus represents the only step of substrate-level phosphorylation in the TCA. The beta subunit provides nucleotide specificity of the enzyme and binds the substrate succinate, while the binding sites for coenzyme A and phosphate are found in the alpha subunit. The chain is Succinate--CoA ligase [ADP-forming] subunit beta from Rhizobium meliloti (strain 1021) (Ensifer meliloti).